Reading from the N-terminus, the 281-residue chain is Probable endonuclease 4 (281 aa).

Zn(2+) contacts are provided by H69, H109, E145, D179, H182, H216, D229, H231, and E261.

Belongs to the AP endonuclease 2 family. It depends on Zn(2+) as a cofactor.

It catalyses the reaction Endonucleolytic cleavage to 5'-phosphooligonucleotide end-products.. Endonuclease IV plays a role in DNA repair. It cleaves phosphodiester bonds at apurinic or apyrimidinic (AP) sites, generating a 3'-hydroxyl group and a 5'-terminal sugar phosphate. The sequence is that of Probable endonuclease 4 from Nautilia profundicola (strain ATCC BAA-1463 / DSM 18972 / AmH).